Reading from the N-terminus, the 462-residue chain is tRNA(Ile)-lysidine synthase (462 aa).

Residue 26 to 31 (SGGVDS) coordinates ATP.

It belongs to the tRNA(Ile)-lysidine synthase family.

Its subcellular location is the cytoplasm. It catalyses the reaction cytidine(34) in tRNA(Ile2) + L-lysine + ATP = lysidine(34) in tRNA(Ile2) + AMP + diphosphate + H(+). Functionally, ligates lysine onto the cytidine present at position 34 of the AUA codon-specific tRNA(Ile) that contains the anticodon CAU, in an ATP-dependent manner. Cytidine is converted to lysidine, thus changing the amino acid specificity of the tRNA from methionine to isoleucine. The sequence is that of tRNA(Ile)-lysidine synthase from Enterococcus faecalis (strain ATCC 700802 / V583).